Reading from the N-terminus, the 1107-residue chain is Ubiquitin-associated protein 2-like (1107 aa).

Met-1 is modified (N-acetylmethionine). The segment at 1 to 33 is disordered; it reads MMTSVGTNRARGNWEQPQNQNQTQHKQRPQATA. The 41-residue stretch at 49–89 folds into the UBA domain; sequence DFEEKVKQLIDITGKNQDECVIALHDCNGDVNRAINVLLEG. A disordered region spans residues 92–229; the sequence is DTHSWEMVGK…NTWNNTGHFE (138 aa). Basic and acidic residues predominate over residues 118–132; it reads EEGKENRDRDRDYSR. Residues 133–145 show a composition bias toward basic residues; the sequence is RRGGPPRRGRGAS. Asymmetric dimethylarginine occurs at positions 187 and 190. The span at 213 to 226 shows a compositional bias: low complexity; that stretch reads NYGNSSGNTWNNTG. Phosphoserine occurs at positions 376, 380, and 436. Position 445 is a phosphothreonine (Thr-445). Disordered regions lie at residues 461 to 513, 550 to 676, and 689 to 814; these read AVAT…KKTS, SDYE…IPSL, and ANQH…LPPG. Residues Ser-474, Ser-487, Ser-490, Ser-491, and Ser-497 each carry the phosphoserine modification. Low complexity-rich tracts occupy residues 494–505 and 554–589; these read QSSSPQPAQQKL and STPT…SQES. Residues 590 to 656 show a composition bias toward polar residues; the sequence is GYQSGPIQST…TQLQTTQSVE (67 aa). A phosphoserine mark is found at Ser-624, Ser-625, Ser-628, and Ser-629. Low complexity predominate over residues 665 to 675; sequence SESPSTSSIPS. Polar residues predominate over residues 689-713; sequence ANQHSSSLSGLSHTEEIPNTTTTQH. Low complexity predominate over residues 714–804; the sequence is SSALSTQQNT…STRSSVATTS (91 aa). Phosphoserine occurs at positions 872 and 879. Disordered stretches follow at residues 885–921 and 1060–1107; these read FGRG…LNPA and QQPH…WGAN. 2 stretches are compositionally biased toward low complexity: residues 893–916 and 1073–1087; these read PAPA…TQQT and QDGQ…QTSS. The span at 1088–1107 shows a compositional bias: polar residues; it reads IPQKPQTNKSAYNSYSWGAN.

Interacts with BMI1. Part of a complex consisting of UBAP2L, BMI1 and RNF2. Interacts with G3BP1 (via NTF2 domain); promoting stress granule formation.

The protein resides in the nucleus. It is found in the chromosome. Its subcellular location is the cytoplasm. The protein localises to the stress granule. Its function is as follows. Recruits the ubiquitination machinery to RNA polymerase II for polyubiquitination, removal and degradation, when the transcription-coupled nucleotide excision repair (TC-NER) machinery fails to resolve DNA damage. Plays an important role in the activity of long-term repopulating hematopoietic stem cells (LT-HSCs). Is a regulator of stress granule assembly, required for their efficient formation. Required for proper brain development and neocortex lamination. This Mus musculus (Mouse) protein is Ubiquitin-associated protein 2-like.